The following is a 555-amino-acid chain: Inositol 1,4,5-trisphosphate receptor-interacting protein-like 1 (555 aa).

The N-terminal stretch at 1 to 24 (MNVDAEASMAVISLLFLAVMYVVH) is a signal peptide. The Extracellular portion of the chain corresponds to 25 to 103 (HPLMVSDRMD…WPFQADGQEG (79 aa)). Residues 38–74 (LARSRQLEKRMSEEMRLLEMEFEERKRAAEQRQKAEN) adopt a coiled-coil conformation. The chain crosses the membrane as a helical span at residues 104–124 (PLGWMLGNLWNTGLFCLFLVF). Residues 125 to 555 (ELLRQNMQHE…LPHAPLAAAP (431 aa)) lie on the Cytoplasmic side of the membrane.

It belongs to the ITPRIP family. Expressed in testis and tumoral cells.

The protein localises to the cell membrane. Functionally, functions as a ligand of CD3E, inhibiting TCR-CD3 complex signaling to regulate T cell activation. Induces stable CD3E-NCK1 binding, thereby preventing the CD3E-ZAP70 interaction and subsequently inhibiting the activation of the downstream ERK-NFkB signaling cascade and calcium influx. This is Inositol 1,4,5-trisphosphate receptor-interacting protein-like 1 from Homo sapiens (Human).